The primary structure comprises 346 residues: Protein NDL1 (346 aa).

It belongs to the NDRG family. As to quaternary structure, interacts with GB1. Interacts with the heterodimers formed by GB1 and GG1, or GB1 and GG2. Interacts with RGS1. Expressed in root vasculature, cotyledons, leaves, petals, mature stamens and pollen grains.

It is found in the cytoplasm. Functionally, interacts with the heterotrimeric G protein beta subunit GB1 and plays an significant role in GB1-dependent regulation of lateral root formation. Involved in a signaling pathway that modulates root auxin transport and auxin gradients. Acts partially by positively regulating the auxin carrier PIN2 and AUX1. Acts, together with GB1 as positive regulator of meristem initiation and branching. GB1 and NDL1 positively regulate basipetal inflorescence auxin transport and modulate MAX2 expression in shoots, which regulates organ and lateral meristem formation by the establishment and maintenance of auxin gradients. This is Protein NDL1 from Arabidopsis thaliana (Mouse-ear cress).